The primary structure comprises 259 residues: Isoepoxydon dehydrogenase patN (259 aa).

NADP(+) contacts are provided by Asp69, Asn96, and Lys125. Catalysis depends on proton donor residues Ser143 and Ser144. Residues Tyr158, Lys162, and Val191 each contribute to the NADP(+) site. Tyr158 acts as the Proton acceptor in catalysis. The active-site Lowers pKa of active site Tyr is Lys162.

The protein belongs to the short-chain dehydrogenases/reductases (SDR) family.

It is found in the cytoplasm. The protein localises to the cytosol. It catalyses the reaction isoepoxydon + NADP(+) = phyllostine + NADPH + H(+). It participates in mycotoxin biosynthesis; patulin biosynthesis. Its function is as follows. Isoepoxydon dehydrogenase; part of the gene cluster that mediates the biosynthesis of patulin, an acetate-derived tetraketide mycotoxin produced by several fungal species that shows antimicrobial properties against several bacteria. PatN catalyzes the conversion of isoepoxydon into phyllostine. The pathway begins with the synthesis of 6-methylsalicylic acid by the polyketide synthase (PKS) patK via condensation of acetate and malonate units. The 6-methylsalicylic acid decarboxylase patG then catalyzes the decarboxylation of 6-methylsalicylic acid to yield m-cresol (also known as 3-methylphenol). These first reactions occur in the cytosol. The intermediate m-cresol is then transported into the endoplasmic reticulum where the cytochrome P450 monooxygenase patH converts it to m-hydroxybenzyl alcohol, which is further converted to gentisyl alcohol by the cytochrome P450 monooxygenase patI. The oxidoreductases patJ and patO further convert gentisyl alcohol to isoepoxydon in the vacuole. PatN catalyzes then the transformation of isoepoxydon into phyllostine. The cluster protein patF is responsible for the conversion from phyllostine to neopatulin whereas the alcohol dehydrogenase patD converts neopatulin to E-ascladiol. The steps between isoepoxydon and E-ascladiol occur in the cytosol, and E-ascladiol is probably secreted to the extracellular space by one of the cluster-specific transporters patC or patM. Finally, the secreted patulin synthase patE catalyzes the conversion of E-ascladiol to patulin. In Penicillium expansum (Blue mold rot fungus), this protein is Isoepoxydon dehydrogenase patN.